Reading from the N-terminus, the 314-residue chain is tRNA pseudouridine synthase B (314 aa).

Aspartate 41 functions as the Nucleophile in the catalytic mechanism.

This sequence belongs to the pseudouridine synthase TruB family. Type 1 subfamily.

It catalyses the reaction uridine(55) in tRNA = pseudouridine(55) in tRNA. Its function is as follows. Responsible for synthesis of pseudouridine from uracil-55 in the psi GC loop of transfer RNAs. The chain is tRNA pseudouridine synthase B from Prochlorococcus marinus (strain NATL1A).